The primary structure comprises 636 residues: Nucleolin 2 (636 aa).

Disordered regions lie at residues 1–386 (MGKS…SKTL), 458–481 (ANER…SRTI), and 544–636 (SEIG…NDEE). Composition is skewed to basic and acidic residues over residues 43 to 63 (KELI…KKVE) and 76 to 89 (EKTK…KDES). The segment covering 90–103 (SSEEEDDSSSDEEI) has biased composition (acidic residues). The segment covering 104–118 (APAKKRPEPIKKAKV) has biased composition (basic and acidic residues). Composition is skewed to acidic residues over residues 122-133 (SSDDDSTSDEET), 152-163 (SSDDDSSSDEET), and 182-193 (SSDDDSSSDEET). Positions 224 to 238 (TPAKKEPIVVKKDSS) are enriched in basic and acidic residues. 3 stretches are compositionally biased toward acidic residues: residues 267–278 (SSEEESSSDDEP), 299–311 (SSEE…ESDD), and 331–341 (SSDESSDESDK). Basic and acidic residues predominate over residues 342 to 367 (EESKDEKVTPKKKDSDVEMVDAEQKS). Positions 368-383 (NAKQPKTPTNQTQGGS) are enriched in polar residues. 2 RRM domains span residues 384-460 (KTLF…LANE) and 479-558 (RTIY…ESRP). The segment covering 464–481 (PRNSNPGRKGEGSQSRTI) has biased composition (polar residues). Composition is skewed to basic and acidic residues over residues 552-566 (HVEE…EGRS) and 579-604 (RHSD…DRGA). Over residues 622-636 (MESSKGTKTVFNDEE) the composition is skewed to polar residues.

Interacts with THAL in the nucleus. Expressed at low levels in flower buds.

Its subcellular location is the nucleus. The protein localises to the nucleolus. In terms of biological role, involved in pre-rRNA processing and ribosome assembly. The sequence is that of Nucleolin 2 from Arabidopsis thaliana (Mouse-ear cress).